Consider the following 225-residue polypeptide: UPF0758 protein Sbal223_0402 (225 aa).

The MPN domain maps to 102 to 224 (VLTNPDLTRD…IVSFAERGWI (123 aa)). Residues His173, His175, and Asp186 each contribute to the Zn(2+) site. The JAMM motif motif lies at 173 to 186 (HNHPSGIAEPSQAD).

Belongs to the UPF0758 family.

The polypeptide is UPF0758 protein Sbal223_0402 (Shewanella baltica (strain OS223)).